A 773-amino-acid chain; its full sequence is Polyribonucleotide nucleotidyltransferase (773 aa).

The Mg(2+) site is built by D490 and D496. One can recognise a KH domain in the interval 557–616 (PKIDTITIPVDKIKVVIGKGGEQIDKIIAETGVKIDIDDEGLCSIFSSDQAAIDRAKEII). The region spanning 626 to 694 (GEIYDAKVVR…DKGRVDASMR (69 aa)) is the S1 motif domain. A compositionally biased stretch (basic and acidic residues) spans 700–721 (PEGYVEPERKPRERRENGDRRK). The tract at residues 700–773 (PEGYVEPERK…FPELSTKKPE (74 aa)) is disordered. The span at 739–748 (RNNQGNKVGN) shows a compositional bias: low complexity. Positions 751-773 (FELRERKSHIDEEFPELSTKKPE) are enriched in basic and acidic residues.

This sequence belongs to the polyribonucleotide nucleotidyltransferase family. Requires Mg(2+) as cofactor.

The protein localises to the cytoplasm. It carries out the reaction RNA(n+1) + phosphate = RNA(n) + a ribonucleoside 5'-diphosphate. Involved in mRNA degradation. Catalyzes the phosphorolysis of single-stranded polyribonucleotides processively in the 3'- to 5'-direction. This chain is Polyribonucleotide nucleotidyltransferase, found in Lactococcus lactis subsp. lactis (strain IL1403) (Streptococcus lactis).